A 287-amino-acid chain; its full sequence is tRNA selenocysteine 1-associated protein 1 (287 aa).

RRM domains lie at 3–86 and 96–175; these read ASLW…YVTY and YSLF…VAIP.

It belongs to the RRM TRSPAP family. In terms of assembly, component of the tRNA(Sec) complex composed at least of EEFSEC, SECISBP2, SEPHS1, SEPSECS, TRNAU1AP and tRNA(Sec). Found in a complex with tRNA(Sec). Interacts with SEPSECS. Associates with mRNP and/or polysomes. Found in a complex with EEFSEC, SECISBP2, TRNAU1AP and tRNA(Sec).

It is found in the nucleus. It localises to the cytoplasm. In terms of biological role, involved in the early steps of selenocysteine biosynthesis and tRNA(Sec) charging to the later steps resulting in the cotranslational incorporation of selenocysteine into selenoproteins. Stabilizes the SECISBP2, EEFSEC and tRNA(Sec) complex. May be involved in the methylation of tRNA(Sec). Enhances efficiency of selenoproteins synthesis. The protein is tRNA selenocysteine 1-associated protein 1 (TRNAU1AP) of Pongo abelii (Sumatran orangutan).